Here is a 305-residue protein sequence, read N- to C-terminus: UDP-3-O-acyl-N-acetylglucosamine deacetylase (305 aa).

Positions 79, 238, and 242 each coordinate Zn(2+). The active-site Proton donor is His265.

Belongs to the LpxC family. The cofactor is Zn(2+).

The catalysed reaction is a UDP-3-O-[(3R)-3-hydroxyacyl]-N-acetyl-alpha-D-glucosamine + H2O = a UDP-3-O-[(3R)-3-hydroxyacyl]-alpha-D-glucosamine + acetate. Its pathway is glycolipid biosynthesis; lipid IV(A) biosynthesis; lipid IV(A) from (3R)-3-hydroxytetradecanoyl-[acyl-carrier-protein] and UDP-N-acetyl-alpha-D-glucosamine: step 2/6. Its function is as follows. Catalyzes the hydrolysis of UDP-3-O-myristoyl-N-acetylglucosamine to form UDP-3-O-myristoylglucosamine and acetate, the committed step in lipid A biosynthesis. This is UDP-3-O-acyl-N-acetylglucosamine deacetylase from Vibrio cholerae serotype O1 (strain ATCC 39541 / Classical Ogawa 395 / O395).